Here is a 222-residue protein sequence, read N- to C-terminus: Small ribosomal subunit protein uS3 (222 aa).

One can recognise a KH type-2 domain in the interval 39–108 (IRRHIKEKLY…TISLDIKEIK (70 aa)).

It belongs to the universal ribosomal protein uS3 family. In terms of assembly, part of the 30S ribosomal subunit. Forms a tight complex with proteins S10 and S14.

Functionally, binds the lower part of the 30S subunit head. Binds mRNA in the 70S ribosome, positioning it for translation. The sequence is that of Small ribosomal subunit protein uS3 from Caldicellulosiruptor saccharolyticus (strain ATCC 43494 / DSM 8903 / Tp8T 6331).